Consider the following 92-residue polypeptide: DNA-directed RNA polymerase subunit Rpo11 (92 aa).

It belongs to the archaeal Rpo11/eukaryotic RPB11/RPC19 RNA polymerase subunit family. Part of the RNA polymerase complex.

The protein localises to the cytoplasm. The enzyme catalyses RNA(n) + a ribonucleoside 5'-triphosphate = RNA(n+1) + diphosphate. Its function is as follows. DNA-dependent RNA polymerase (RNAP) catalyzes the transcription of DNA into RNA using the four ribonucleoside triphosphates as substrates. This is DNA-directed RNA polymerase subunit Rpo11 from Halorubrum lacusprofundi (strain ATCC 49239 / DSM 5036 / JCM 8891 / ACAM 34).